Reading from the N-terminus, the 531-residue chain is UDP-glucuronosyltransferase 1A7 (531 aa).

The N-terminal stretch at 1 to 25 (MAPADVPASLPLGLCLLLASGFGHA) is a signal peptide. Asn71, Asn293, and Asn431 each carry an N-linked (GlcNAc...) asparagine glycan. A helical transmembrane segment spans residues 487–503 (LDVIGFLLAIVLTVVFI).

The protein belongs to the UDP-glycosyltransferase family. As to quaternary structure, homodimer. Homooligomer. Interacts with UGT1A1, UGT1A3, UGT1A4, UGT1A6, UGT1A8, UGT1A9 and UGT1A10 to form heterodimers.

The protein resides in the endoplasmic reticulum membrane. The catalysed reaction is glucuronate acceptor + UDP-alpha-D-glucuronate = acceptor beta-D-glucuronoside + UDP + H(+). The enzyme catalyses 17alpha-estradiol + UDP-alpha-D-glucuronate = 17alpha-estradiol 3-O-(beta-D-glucuronate) + UDP + H(+). It catalyses the reaction prunetin + UDP-alpha-D-glucuronate = prunetin-5-O-beta-D-glucuronide + UDP. It carries out the reaction 5-epi-5-F2t-IsoP + UDP-alpha-D-glucuronate = 5-epi-5-F2t-IsoP-glucuronide + UDP + H(+). The catalysed reaction is (E)-ferulate + UDP-alpha-D-glucuronate = (E)-ferulic acid beta-D-glucuronate ester + UDP. The enzyme catalyses candesartan + UDP-alpha-D-glucuronate = candesartan O-beta-D-glucuronoside + UDP. It catalyses the reaction SN-38 + UDP-alpha-D-glucuronate = SN-38 O-beta-D-glucuronide + UDP + H(+). It carries out the reaction mycophenolate + UDP-alpha-D-glucuronate = mycophenolate 7-O-beta-D-glucuronide + UDP + H(+). Functionally, UDP-glucuronosyltransferase (UGT) that catalyzes phase II biotransformation reactions in which lipophilic substrates are conjugated with glucuronic acid to increase the metabolite's water solubility, thereby facilitating excretion into either the urine or bile. Essential for the elimination and detoxification of drugs, xenobiotics and endogenous compounds. Catalyzes the glucuronidation of endogenous estrogen hormone epiestradiol. Involved in the glucuronidation of F2-isoprostane (5-epi-5-F2t-IsoP). Involved in the glucuronidation of the phytochemical ferulic acid at the carboxylic acid group. Also catalyzes the glucuronidation of the isoflavones genistein, daidzein, glycitein, formononetin, biochanin A and prunetin, which are phytoestrogens with anticancer and cardiovascular properties. Involved in the glucuronidation of the AGTR1 angiotensin receptor antagonist caderastan, a drug which can inhibit the effect of angiotensin II. Involved in the biotransformation of 7-ethyl-10-hydroxycamptothecin (SN-38), the pharmacologically active metabolite of the anticancer drug irinotecan. Also metabolizes mycophenolate, an immunosuppressive agent. This chain is UDP-glucuronosyltransferase 1A7, found in Rattus norvegicus (Rat).